We begin with the raw amino-acid sequence, 79 residues long: UPF0180 protein BCAH820_1484 (79 aa).

This sequence belongs to the UPF0180 family.

In Bacillus cereus (strain AH820), this protein is UPF0180 protein BCAH820_1484.